Consider the following 97-residue polypeptide: HssA/B-like protein 38 (97 aa).

Residues 1-29 (MTLFSSISSISNPMTSSKSSISSFGSGTS) are disordered.

The protein belongs to the hssA/B family.

The polypeptide is HssA/B-like protein 38 (hssl38) (Dictyostelium discoideum (Social amoeba)).